The following is a 621-amino-acid chain: DnaJ homolog subfamily C member 2 (621 aa).

M1 carries the N-acetylmethionine modification. Residues 23–31 (STLCQVEPV) form an epitope (recognized by CD8(+) cytotoxic T-lymphocytes) region. Phosphoserine is present on residues S47, S49, S60, and S63. The 74-residue stretch at 88–161 (DHYAVLGLGH…VKRRAFNSVD (74 aa)) folds into the J domain. The tract at residues 160 to 250 (VDPTFDNSVP…RDERRWIEKQ (91 aa)) is ZRF1-UBD. Disordered stretches follow at residues 294 to 315 (EKKA…QRQA) and 426 to 453 (KEEA…GSKN). SANT domains are found at residues 449–511 (NGSK…KLDP) and 549–604 (TDFT…EMVK).

In terms of assembly, component of ribosome-associated complex (RAC), a heterodimer composed of Hsp70/DnaK-type chaperone HSPA14 and Hsp40/DnaJ-type chaperone DNAJC2. Interacts (via ZRF1-UBD region) with ID1. Phosphorylated in M (mitotic) phase. As to expression, widely expressed.

Its subcellular location is the nucleus. The protein localises to the cytoplasm. The protein resides in the cytosol. Its function is as follows. Acts both as a chaperone in the cytosol and as a chromatin regulator in the nucleus. When cytosolic, acts as a molecular chaperone: component of the ribosome-associated complex (RAC), a complex involved in folding or maintaining nascent polypeptides in a folding-competent state. In the RAC complex, stimulates the ATPase activity of the ribosome-associated pool of Hsp70-type chaperones HSPA14 that bind to the nascent polypeptide chain. When nuclear, mediates the switching from polycomb-repressed genes to an active state: specifically recruited at histone H2A ubiquitinated at 'Lys-119' (H2AK119ub), and promotes the displacement of the polycomb PRC1 complex from chromatin, thereby facilitating transcription activation. The sequence is that of DnaJ homolog subfamily C member 2 (DNAJC2) from Homo sapiens (Human).